Here is a 140-residue protein sequence, read N- to C-terminus: 3-hydroxyacyl-[acyl-carrier-protein] dehydratase FabZ (140 aa).

The active site involves H48.

Belongs to the thioester dehydratase family. FabZ subfamily.

The protein localises to the cytoplasm. The catalysed reaction is a (3R)-hydroxyacyl-[ACP] = a (2E)-enoyl-[ACP] + H2O. In terms of biological role, involved in unsaturated fatty acids biosynthesis. Catalyzes the dehydration of short chain beta-hydroxyacyl-ACPs and long chain saturated and unsaturated beta-hydroxyacyl-ACPs. The chain is 3-hydroxyacyl-[acyl-carrier-protein] dehydratase FabZ from Pelotomaculum thermopropionicum (strain DSM 13744 / JCM 10971 / SI).